The chain runs to 518 residues: Bifunctional purine biosynthesis protein PurH (518 aa).

An MGS-like domain is found at 1-144 (MNRRAVLSVS…KNQERVSIVV (144 aa)).

This sequence belongs to the PurH family.

It carries out the reaction (6R)-10-formyltetrahydrofolate + 5-amino-1-(5-phospho-beta-D-ribosyl)imidazole-4-carboxamide = 5-formamido-1-(5-phospho-D-ribosyl)imidazole-4-carboxamide + (6S)-5,6,7,8-tetrahydrofolate. It catalyses the reaction IMP + H2O = 5-formamido-1-(5-phospho-D-ribosyl)imidazole-4-carboxamide. It participates in purine metabolism; IMP biosynthesis via de novo pathway; 5-formamido-1-(5-phospho-D-ribosyl)imidazole-4-carboxamide from 5-amino-1-(5-phospho-D-ribosyl)imidazole-4-carboxamide (10-formyl THF route): step 1/1. Its pathway is purine metabolism; IMP biosynthesis via de novo pathway; IMP from 5-formamido-1-(5-phospho-D-ribosyl)imidazole-4-carboxamide: step 1/1. The sequence is that of Bifunctional purine biosynthesis protein PurH from Desulfitobacterium hafniense (strain DSM 10664 / DCB-2).